The primary structure comprises 92 residues: MALPSAWSVMRVVIPFISVLGLLGVRLVGASQDSGSVIPAESRPCVDCHAFEFMQRALQDLKKMAYNLDTRTETLLLRAEKRGLCDCFPAMH.

Residues 1 to 30 (MALPSAWSVMRVVIPFISVLGLLGVRLVGA) form the signal peptide.

The protein belongs to the NICOL family.

The protein localises to the secreted. It is found in the cytoplasm. Its subcellular location is the perinuclear region. MRNA-binding protein which interacts with a range of target mRNAs and may promote extracellular matrix production. May function as a component of lumicrine signaling and may play a crucial role in epididymal-mediated sperm maturation and male fertility. This is NELL2-interacting cell ontogeny regulator 1 from Gallus gallus (Chicken).